The sequence spans 344 residues: Ketol-acid reductoisomerase (NADP(+)) (344 aa).

Positions Glu-2–Thr-181 constitute a KARI N-terminal Rossmann domain. Residues Tyr-25–Gln-28, Arg-48, Ser-52, and Asp-82–Gln-85 contribute to the NADP(+) site. His-107 is an active-site residue. Residue Gly-133 coordinates NADP(+). A KARI C-terminal knotted domain is found at Thr-182–Ile-327. The Mg(2+) site is built by Asp-190, Glu-194, Glu-226, and Glu-230. Position 251 (Ser-251) interacts with substrate.

This sequence belongs to the ketol-acid reductoisomerase family. It depends on Mg(2+) as a cofactor.

The catalysed reaction is (2R)-2,3-dihydroxy-3-methylbutanoate + NADP(+) = (2S)-2-acetolactate + NADPH + H(+). The enzyme catalyses (2R,3R)-2,3-dihydroxy-3-methylpentanoate + NADP(+) = (S)-2-ethyl-2-hydroxy-3-oxobutanoate + NADPH + H(+). It participates in amino-acid biosynthesis; L-isoleucine biosynthesis; L-isoleucine from 2-oxobutanoate: step 2/4. Its pathway is amino-acid biosynthesis; L-valine biosynthesis; L-valine from pyruvate: step 2/4. Functionally, involved in the biosynthesis of branched-chain amino acids (BCAA). Catalyzes an alkyl-migration followed by a ketol-acid reduction of (S)-2-acetolactate (S2AL) to yield (R)-2,3-dihydroxy-isovalerate. In the isomerase reaction, S2AL is rearranged via a Mg-dependent methyl migration to produce 3-hydroxy-3-methyl-2-ketobutyrate (HMKB). In the reductase reaction, this 2-ketoacid undergoes a metal-dependent reduction by NADPH to yield (R)-2,3-dihydroxy-isovalerate. This Alicyclobacillus acidocaldarius subsp. acidocaldarius (strain ATCC 27009 / DSM 446 / BCRC 14685 / JCM 5260 / KCTC 1825 / NBRC 15652 / NCIMB 11725 / NRRL B-14509 / 104-IA) (Bacillus acidocaldarius) protein is Ketol-acid reductoisomerase (NADP(+)).